The chain runs to 324 residues: tRNA U34 carboxymethyltransferase (324 aa).

Carboxy-S-adenosyl-L-methionine is bound by residues K91, W105, K110, G130, 152-154 (DPS), 181-182 (IE), M196, Y200, and R315.

The protein belongs to the class I-like SAM-binding methyltransferase superfamily. CmoB family. Homotetramer.

It carries out the reaction carboxy-S-adenosyl-L-methionine + 5-hydroxyuridine(34) in tRNA = 5-carboxymethoxyuridine(34) in tRNA + S-adenosyl-L-homocysteine + H(+). In terms of biological role, catalyzes carboxymethyl transfer from carboxy-S-adenosyl-L-methionine (Cx-SAM) to 5-hydroxyuridine (ho5U) to form 5-carboxymethoxyuridine (cmo5U) at position 34 in tRNAs. This Aliivibrio fischeri (strain ATCC 700601 / ES114) (Vibrio fischeri) protein is tRNA U34 carboxymethyltransferase.